A 300-amino-acid chain; its full sequence is Homoserine kinase (300 aa).

An ATP-binding site is contributed by 87–97 (PISRGLGSSSA).

It belongs to the GHMP kinase family. Homoserine kinase subfamily.

It is found in the cytoplasm. It carries out the reaction L-homoserine + ATP = O-phospho-L-homoserine + ADP + H(+). It participates in amino-acid biosynthesis; L-threonine biosynthesis; L-threonine from L-aspartate: step 4/5. Functionally, catalyzes the ATP-dependent phosphorylation of L-homoserine to L-homoserine phosphate. This chain is Homoserine kinase, found in Clostridium kluyveri (strain ATCC 8527 / DSM 555 / NBRC 12016 / NCIMB 10680 / K1).